A 72-amino-acid chain; its full sequence is Phycobilisome 37.5 kDa linker polypeptide, phycocyanin-associated, rod (72 aa).

The region spanning 1 to 72 is the PBS-linker domain; it reads MTSSAAAIRL…ASGNISVREF (72 aa).

Belongs to the phycobilisome linker protein family.

It localises to the cellular thylakoid membrane. In terms of biological role, rod linker protein, associated with phycocyanin. Linker polypeptides determine the state of aggregation and the location of the disk-shaped phycobiliprotein units within the phycobilisome and modulate their spectroscopic properties in order to mediate a directed and optimal energy transfer. The sequence is that of Phycobilisome 37.5 kDa linker polypeptide, phycocyanin-associated, rod (cpcH2) from Pseudanabaena tenuis (strain PCC 7409).